The primary structure comprises 105 residues: Urease subunit beta (105 aa).

The protein belongs to the urease beta subunit family. In terms of assembly, heterotrimer of UreA (gamma), UreB (beta) and UreC (alpha) subunits. Three heterotrimers associate to form the active enzyme.

It is found in the cytoplasm. The enzyme catalyses urea + 2 H2O + H(+) = hydrogencarbonate + 2 NH4(+). It participates in nitrogen metabolism; urea degradation; CO(2) and NH(3) from urea (urease route): step 1/1. This chain is Urease subunit beta, found in Pseudomonas putida (strain W619).